The following is a 443-amino-acid chain: 3-phosphoshikimate 1-carboxyvinyltransferase (443 aa).

3 residues coordinate 3-phosphoshikimate: lysine 24, serine 25, and arginine 29. Lysine 24 lines the phosphoenolpyruvate pocket. Residues glycine 96 and arginine 124 each coordinate phosphoenolpyruvate. Serine 168, glutamine 170, aspartate 316, and lysine 343 together coordinate 3-phosphoshikimate. Glutamine 170 is a phosphoenolpyruvate binding site. Aspartate 316 acts as the Proton acceptor in catalysis. Phosphoenolpyruvate contacts are provided by arginine 347 and arginine 391.

It belongs to the EPSP synthase family. As to quaternary structure, monomer.

The protein resides in the cytoplasm. The enzyme catalyses 3-phosphoshikimate + phosphoenolpyruvate = 5-O-(1-carboxyvinyl)-3-phosphoshikimate + phosphate. The protein operates within metabolic intermediate biosynthesis; chorismate biosynthesis; chorismate from D-erythrose 4-phosphate and phosphoenolpyruvate: step 6/7. Its function is as follows. Catalyzes the transfer of the enolpyruvyl moiety of phosphoenolpyruvate (PEP) to the 5-hydroxyl of shikimate-3-phosphate (S3P) to produce enolpyruvyl shikimate-3-phosphate and inorganic phosphate. The protein is 3-phosphoshikimate 1-carboxyvinyltransferase of Dichelobacter nodosus (Bacteroides nodosus).